The chain runs to 193 residues: NADH-quinone oxidoreductase subunit B (193 aa).

Residues Cys-72, Cys-73, Cys-137, and Cys-167 each coordinate [4Fe-4S] cluster.

This sequence belongs to the complex I 20 kDa subunit family. NDH-1 is composed of 14 different subunits. Subunits NuoB, C, D, E, F, and G constitute the peripheral sector of the complex. [4Fe-4S] cluster is required as a cofactor.

It localises to the cell inner membrane. The catalysed reaction is a quinone + NADH + 5 H(+)(in) = a quinol + NAD(+) + 4 H(+)(out). NDH-1 shuttles electrons from NADH, via FMN and iron-sulfur (Fe-S) centers, to quinones in the respiratory chain. The immediate electron acceptor for the enzyme in this species is believed to be ubiquinone. Couples the redox reaction to proton translocation (for every two electrons transferred, four hydrogen ions are translocated across the cytoplasmic membrane), and thus conserves the redox energy in a proton gradient. The polypeptide is NADH-quinone oxidoreductase subunit B (Phenylobacterium zucineum (strain HLK1)).